A 130-amino-acid polypeptide reads, in one-letter code: Small ribosomal subunit protein uS9 (130 aa).

This sequence belongs to the universal ribosomal protein uS9 family.

The chain is Small ribosomal subunit protein uS9 from Idiomarina loihiensis (strain ATCC BAA-735 / DSM 15497 / L2-TR).